A 1298-amino-acid chain; its full sequence is Phosphoribosylformylglycinamidine synthase (1298 aa).

The tract at residues 303–327 (FPGAATGSGGEIRDEGATGRGAKPK) is disordered. ATP-binding positions include 305–316 (GAATGSGGEIRD), 384–386 (TGY), and Ala676. The Mg(2+) site is built by Asp677, Glu716, Asn720, and Asp884. Ser886 is a binding site for ATP. Residues 1045-1298 (VAVLREQGVN…MFRNARAWVN (254 aa)) form the Glutamine amidotransferase type-1 domain. The Nucleophile role is filled by Cys1138. Active-site residues include His1263 and Glu1265.

The protein in the N-terminal section; belongs to the FGAMS family. Monomer.

It is found in the cytoplasm. It catalyses the reaction N(2)-formyl-N(1)-(5-phospho-beta-D-ribosyl)glycinamide + L-glutamine + ATP + H2O = 2-formamido-N(1)-(5-O-phospho-beta-D-ribosyl)acetamidine + L-glutamate + ADP + phosphate + H(+). It participates in purine metabolism; IMP biosynthesis via de novo pathway; 5-amino-1-(5-phospho-D-ribosyl)imidazole from N(2)-formyl-N(1)-(5-phospho-D-ribosyl)glycinamide: step 1/2. Functionally, phosphoribosylformylglycinamidine synthase involved in the purines biosynthetic pathway. Catalyzes the ATP-dependent conversion of formylglycinamide ribonucleotide (FGAR) and glutamine to yield formylglycinamidine ribonucleotide (FGAM) and glutamate. This is Phosphoribosylformylglycinamidine synthase from Pseudomonas savastanoi pv. phaseolicola (strain 1448A / Race 6) (Pseudomonas syringae pv. phaseolicola (strain 1448A / Race 6)).